The following is a 175-amino-acid chain: B9 domain-containing protein 2 (175 aa).

Residues 2–118 form the C2 B9-type domain; that stretch reads AEVHVIGQII…ACPTWRPLGS (117 aa).

It belongs to the B9D family. As to quaternary structure, part of the tectonic-like complex (also named B9 complex). Interacts with TUBG1.

The protein localises to the cytoplasm. The protein resides in the cytoskeleton. Its subcellular location is the cilium basal body. It is found in the cilium axoneme. It localises to the nucleus. Component of the tectonic-like complex, a complex localized at the transition zone of primary cilia and acting as a barrier that prevents diffusion of transmembrane proteins between the cilia and plasma membranes. The chain is B9 domain-containing protein 2 (B9D2) from Homo sapiens (Human).